A 215-amino-acid polypeptide reads, in one-letter code: MSSVYDWFQERLEIQAIADDITSKYVPPHVNIFYCLGGITLTCFIVQVATGFAMTFYYRPTVTEAFASVEYLMTEVNFGWLIRSVHRWSASMMVLNMILHVCRVYLTGGFKKPRELTWVTGVLLASVTVSFGVTGYSLPWDQVGYWACKIVTGVPDAVPIVGGLIVQVLRGGVSVGQSTLTRFYSAHTFVLPVVAAVLMLTHFVMIRKQGISGPL.

Residues 32 to 52 form a helical membrane-spanning segment; sequence IFYCLGGITLTCFIVQVATGF. C35 contacts heme c. Residues H86 and H100 each contribute to the heme b site. Transmembrane regions (helical) follow at residues 90 to 110, 116 to 136, and 186 to 206; these read ASMM…TGGF, LTWV…VTGY, and AHTF…FVMI. Positions 187 and 202 each coordinate heme b.

This sequence belongs to the cytochrome b family. PetB subfamily. As to quaternary structure, the 4 large subunits of the cytochrome b6-f complex are cytochrome b6, subunit IV (17 kDa polypeptide, PetD), cytochrome f and the Rieske protein, while the 4 small subunits are PetG, PetL, PetM and PetN. The complex functions as a dimer. Heme b serves as cofactor. Heme c is required as a cofactor.

Its subcellular location is the plastid. It is found in the chloroplast thylakoid membrane. Its function is as follows. Component of the cytochrome b6-f complex, which mediates electron transfer between photosystem II (PSII) and photosystem I (PSI), cyclic electron flow around PSI, and state transitions. This chain is Cytochrome b6, found in Emiliania huxleyi (Coccolithophore).